The sequence spans 769 residues: Signal transducer and activator of transcription 3.1 (769 aa).

An Essential for nuclear import motif is present at residues 150 to 162 (DVRKKVQDLEQKM). In terms of domain architecture, SH2 spans 580-670 (WNEGYIMGFI…DATNILVSPL (91 aa)). Serine 728 carries the post-translational modification Phosphoserine; by NLK.

Belongs to the transcription factor STAT family. Forms a homodimer or a heterodimer with a related family member, such as stat1. Interacts with nlk.2. Phosphorylation of both tyrosine and serine residues, together with dimerization, is required for mesoderm induction.

It localises to the cytoplasm. The protein localises to the nucleus. Its function is as follows. Transcription factor that binds to target promoter sequences and activates transcription upon il6st/gp130 stimulation. Mediates ventralization of embryos, at least in part via inhibition of smad2 signaling. Required for hairy2 to induce dll1/delta1 and promote neural crest cell proliferation and differentiation. Involved in TGFbeta-mediated mesoderm induction in early embryos, acting downstream of map3k7/tak1 and nlk.2. This chain is Signal transducer and activator of transcription 3.1 (stat3.1), found in Xenopus laevis (African clawed frog).